A 684-amino-acid chain; its full sequence is ATP-dependent DNA helicase RecG (684 aa).

The segment at 51-148 (RHIASMATLQ…ADVPQFQAPH (98 aa)) is wedge domain. In terms of domain architecture, Helicase ATP-binding spans 278–439 (DLARHRPMRR…VHADLEVSVI (162 aa)). 291 to 298 (GDVGSGKT) contacts ATP. The short motif at 392-395 (DEQH) is the DEAH box element.

The protein belongs to the helicase family. RecG subfamily. In terms of assembly, monomer.

The enzyme catalyses Couples ATP hydrolysis with the unwinding of duplex DNA by translocating in the 3'-5' direction.. The catalysed reaction is ATP + H2O = ADP + phosphate + H(+). In terms of biological role, plays a critical role in recombination and DNA repair. Helps process Holliday junction intermediates to mature products by catalyzing branch migration. Has replication fork regression activity, unwinds stalled or blocked replication forks to make a HJ that can be resolved. Has a DNA unwinding activity characteristic of a DNA helicase with 3'-5' polarity. This Acidithiobacillus ferridurans protein is ATP-dependent DNA helicase RecG.